A 535-amino-acid polypeptide reads, in one-letter code: UDP-N-acetylmuramoyl-L-alanyl-D-glutamate--2,6-diaminopimelate ligase (535 aa).

UDP-N-acetyl-alpha-D-muramoyl-L-alanyl-D-glutamate is bound at residue Leu-67. 153–159 (GTSGKTT) is a binding site for ATP. UDP-N-acetyl-alpha-D-muramoyl-L-alanyl-D-glutamate contacts are provided by residues 195–196 (TT), Ser-222, and Arg-230. Lys-262 is modified (N6-carboxylysine). Residues Arg-424, 448-451 (DNPR), Gly-502, and Glu-506 contribute to the meso-2,6-diaminopimelate site. The Meso-diaminopimelate recognition motif signature appears at 448–451 (DNPR).

It belongs to the MurCDEF family. MurE subfamily. It depends on Mg(2+) as a cofactor. Carboxylation is probably crucial for Mg(2+) binding and, consequently, for the gamma-phosphate positioning of ATP.

The protein localises to the cytoplasm. It catalyses the reaction UDP-N-acetyl-alpha-D-muramoyl-L-alanyl-D-glutamate + meso-2,6-diaminopimelate + ATP = UDP-N-acetyl-alpha-D-muramoyl-L-alanyl-gamma-D-glutamyl-meso-2,6-diaminopimelate + ADP + phosphate + H(+). It functions in the pathway cell wall biogenesis; peptidoglycan biosynthesis. In terms of biological role, catalyzes the addition of meso-diaminopimelic acid to the nucleotide precursor UDP-N-acetylmuramoyl-L-alanyl-D-glutamate (UMAG) in the biosynthesis of bacterial cell-wall peptidoglycan. In Mycobacterium bovis (strain ATCC BAA-935 / AF2122/97), this protein is UDP-N-acetylmuramoyl-L-alanyl-D-glutamate--2,6-diaminopimelate ligase.